The primary structure comprises 273 residues: NH(3)-dependent NAD(+) synthetase (273 aa).

47–54 is a binding site for ATP; the sequence is GISGGQDS. Asp-53 lines the Mg(2+) pocket. Arg-139 serves as a coordination point for deamido-NAD(+). Thr-159 provides a ligand contact to ATP. Glu-164 is a Mg(2+) binding site. Deamido-NAD(+)-binding residues include Lys-172 and Asp-179. ATP is bound by residues Lys-188 and Thr-210. 259-260 is a binding site for deamido-NAD(+); that stretch reads HK.

Belongs to the NAD synthetase family. Homodimer.

The enzyme catalyses deamido-NAD(+) + NH4(+) + ATP = AMP + diphosphate + NAD(+) + H(+). Its pathway is cofactor biosynthesis; NAD(+) biosynthesis; NAD(+) from deamido-NAD(+) (ammonia route): step 1/1. Functionally, catalyzes the ATP-dependent amidation of deamido-NAD to form NAD. Uses ammonia as a nitrogen source. In Staphylococcus aureus (strain MRSA252), this protein is NH(3)-dependent NAD(+) synthetase.